Consider the following 415-residue polypeptide: Lipoyl synthase, mitochondrial (415 aa).

A mitochondrion-targeting transit peptide spans Met-1–Tyr-32. Over residues Gln-20–Tyr-32 the composition is skewed to polar residues. The disordered stretch occupies residues Gln-20 to Asn-53. Positions Ala-33–Thr-47 are enriched in low complexity. Cys-132, Cys-137, Cys-143, Cys-163, Cys-167, Cys-170, and Ser-378 together coordinate [4Fe-4S] cluster. One can recognise a Radical SAM core domain in the interval Gly-146–Leu-367. The segment at Ala-395 to Arg-415 is disordered.

It belongs to the radical SAM superfamily. Lipoyl synthase family. The cofactor is [4Fe-4S] cluster.

The protein resides in the mitochondrion. The catalysed reaction is [[Fe-S] cluster scaffold protein carrying a second [4Fe-4S](2+) cluster] + N(6)-octanoyl-L-lysyl-[protein] + 2 oxidized [2Fe-2S]-[ferredoxin] + 2 S-adenosyl-L-methionine + 4 H(+) = [[Fe-S] cluster scaffold protein] + N(6)-[(R)-dihydrolipoyl]-L-lysyl-[protein] + 4 Fe(3+) + 2 hydrogen sulfide + 2 5'-deoxyadenosine + 2 L-methionine + 2 reduced [2Fe-2S]-[ferredoxin]. It functions in the pathway protein modification; protein lipoylation via endogenous pathway; protein N(6)-(lipoyl)lysine from octanoyl-[acyl-carrier-protein]: step 2/2. Catalyzes the radical-mediated insertion of two sulfur atoms into the C-6 and C-8 positions of the octanoyl moiety bound to the lipoyl domains of lipoate-dependent enzymes, thereby converting the octanoylated domains into lipoylated derivatives. The sequence is that of Lipoyl synthase, mitochondrial from Aspergillus flavus (strain ATCC 200026 / FGSC A1120 / IAM 13836 / NRRL 3357 / JCM 12722 / SRRC 167).